Here is a 380-residue protein sequence, read N- to C-terminus: Protein kinase ORF15 (380 aa).

In terms of domain architecture, Protein kinase spans 93 to 371 (FIPVKVAGCL…LLIAQLTKFI (279 aa)). Lysine 118 serves as a coordination point for ATP. Aspartate 217 serves as the catalytic Proton acceptor.

Belongs to the protein kinase superfamily. Ser/Thr protein kinase family.

It carries out the reaction L-seryl-[protein] + ATP = O-phospho-L-seryl-[protein] + ADP + H(+). The enzyme catalyses L-threonyl-[protein] + ATP = O-phospho-L-threonyl-[protein] + ADP + H(+). The sequence is that of Protein kinase ORF15 (ORF15) from Ictalurid herpesvirus 1 (strain Auburn) (IcHV-1).